The primary structure comprises 1172 residues: Protein diaphanous homolog 3 (1172 aa).

Residues 1–15 (MEKHRARALGRDSKA) show a composition bias toward basic and acidic residues. The disordered stretch occupies residues 1-36 (MEKHRARALGRDSKASRRKGLPSAPPAGPYELGEKR). Positions 16–39 (SRRKGLPSAPPAGPYELGEKRPKL) match the Nuclear localization signal motif. Thr-47 is subject to Phosphothreonine. Ser-56 carries the post-translational modification Phosphoserine. The disordered stretch occupies residues 57-96 (IRIPKGSKKERPPLPQLKTVSGSSDYSSVSSETMENNPKS). The segment covering 77–87 (SGSSDYSSVSS) has biased composition (low complexity). The 363-residue stretch at 94–456 (PKSLSENEVL…QIVLHRDGID (363 aa)) folds into the GBD/FH3 domain. A Phosphoserine modification is found at Ser-155. A coiled-coil region spans residues 493–530 (CKKFEKECTDHQETQAQLQKKEAKINELQAELQAFKSQ). The disordered stretch occupies residues 535–586 (PPGTKIPLQTSAKGEPGPSAFPPAPPALGAGVPPPPPPPPPPPPPLPGMAMP). In terms of domain architecture, FH1 spans 541-611 (PLQTSAKGEP…GQNFIPLNLP (71 aa)). The span at 553 to 581 (SAFPPAPPALGAGVPPPPPPPPPPPPPLP) shows a compositional bias: pro residues. In terms of domain architecture, FH2 spans 616–1014 (PKKEFKPEIS…EKRARIAKER (399 aa)). Positions 1037–1067 (DETGVMDSLLEALQSGAAFRDRRKRTPKLKD) constitute a DAD domain. A phosphoserine mark is found at Ser-1073 and Ser-1158. The short motif at 1163 to 1172 (EALLARLRAL) is the Nuclear export signal element.

It belongs to the formin homology family. Diaphanous subfamily. Ubiquitinated. As to expression, expressed in testis. Present in Sertoli cells (at protein level).

Its subcellular location is the cytoplasm. It localises to the nucleus. Functionally, actin nucleation and elongation factor required for the assembly of F-actin structures, such as actin cables and stress fibers. Required for cytokinesis, stress fiber formation and transcriptional activation of the serum response factor. Binds to GTP-bound form of Rho and to profilin: acts in a Rho-dependent manner to recruit profilin to the membrane, where it promotes actin polymerization. DFR proteins couple Rho and Src tyrosine kinase during signaling and the regulation of actin dynamics. Also acts as an actin nucleation and elongation factor in the nucleus by promoting nuclear actin polymerization inside the nucleus to drive serum-dependent SRF-MRTFA activity. The protein is Protein diaphanous homolog 3 of Rattus norvegicus (Rat).